Consider the following 319-residue polypeptide: Thioredoxin reductase (319 aa).

Residue 36 to 43 (TGTNKGGQ) coordinates FAD. Residues C136 and C139 are joined by a disulfide bond. 288 to 297 (DVIDHVYRQA) is an FAD binding site.

It belongs to the class-II pyridine nucleotide-disulfide oxidoreductase family. In terms of assembly, homodimer. The cofactor is FAD.

It localises to the cytoplasm. The enzyme catalyses [thioredoxin]-dithiol + NADP(+) = [thioredoxin]-disulfide + NADPH + H(+). The protein is Thioredoxin reductase (trxB) of Buchnera aphidicola subsp. Acyrthosiphon pisum (strain APS) (Acyrthosiphon pisum symbiotic bacterium).